The chain runs to 468 residues: ATP synthase subunit beta (468 aa).

Residue 155-162 (GGAGVGKT) participates in ATP binding.

The protein belongs to the ATPase alpha/beta chains family. In terms of assembly, F-type ATPases have 2 components, CF(1) - the catalytic core - and CF(0) - the membrane proton channel. CF(1) has five subunits: alpha(3), beta(3), gamma(1), delta(1), epsilon(1). CF(0) has three main subunits: a(1), b(2) and c(9-12). The alpha and beta chains form an alternating ring which encloses part of the gamma chain. CF(1) is attached to CF(0) by a central stalk formed by the gamma and epsilon chains, while a peripheral stalk is formed by the delta and b chains.

Its subcellular location is the cell membrane. It carries out the reaction ATP + H2O + 4 H(+)(in) = ADP + phosphate + 5 H(+)(out). In terms of biological role, produces ATP from ADP in the presence of a proton gradient across the membrane. The catalytic sites are hosted primarily by the beta subunits. This chain is ATP synthase subunit beta, found in Streptococcus pneumoniae (strain ATCC BAA-255 / R6).